Here is a 210-residue protein sequence, read N- to C-terminus: Glutathione S-transferase P (210 aa).

Residues 2 to 81 form the GST N-terminal domain; the sequence is PPYTVVYFPV…HLGRTLGLYG (80 aa). Tyr4 bears the Phosphotyrosine; by EGFR mark. Residues Tyr8, Arg14, Trp39, Lys45, and 52 to 53 each bind glutathione; that span reads QL. Thr62 carries the post-translational modification Phosphothreonine. 65–66 is a binding site for glutathione; it reads QS. In terms of domain architecture, GST C-terminal spans 83 to 204; that stretch reads DQQEAALVDM…ASPEYVNLPI (122 aa). Residues Lys103 and Lys116 each carry the N6-succinyllysine modification. Residue Lys128 is modified to N6-acetyllysine. Tyr199 carries the phosphotyrosine; by EGFR modification.

It belongs to the GST superfamily. Pi family. As to quaternary structure, homodimer. Interacts with CDK5.

It is found in the cytoplasm. The protein localises to the mitochondrion. It localises to the nucleus. It carries out the reaction RX + glutathione = an S-substituted glutathione + a halide anion + H(+). The catalysed reaction is prostaglandin J2 + glutathione = prostaglandin J2-S-(R)-glutathione. The enzyme catalyses prostaglandin J2 + glutathione = prostaglandin J2-S-(S)-glutathione. It catalyses the reaction prostaglandin A2 + glutathione = prostaglandin A2-S-(S)-glutathione. It carries out the reaction 11(S)-hydroxy-14(S),15(S)-epoxy-(5Z,8Z,12E)-eicosatrienoate + glutathione = (11S,15S)-dihydroxy-14(R)-S-glutathionyl-(5Z,8Z,12E)-eicosatrienoate. In terms of biological role, conjugation of reduced glutathione to a wide number of exogenous and endogenous hydrophobic electrophiles. Involved in the formation of glutathione conjugates of both prostaglandin A2 (PGA2) and prostaglandin J2 (PGJ2). Participates in the formation of novel hepoxilin regioisomers. Negatively regulates CDK5 activity via p25/p35 translocation to prevent neurodegeneration. This Homo sapiens (Human) protein is Glutathione S-transferase P.